A 284-amino-acid polypeptide reads, in one-letter code: MKRLPAVAGSFYESDPKKLKMQIEWSFRHNIGPRDIPKQTYEKKKRDNLFFVVPHAGYIYSGPVAAHSYYYLVSEGRPDVVIILGPNHTGLGSYVSAWPKGEWETPLGSVKIDEEILMQLVKESEVIDLDEKSHLYEHSIEVQLPFLQYFFDDDFKIVPIVIMMQTPEIAEFLADAIYNVMQKNPDKDIVVLASSDMNHYDPHEITVKKDVEAIEKIQQLDYKGLYEVVEGKDVTLCGYGPIMVNLILAKKFGKKAYILKHATSGDTSGPKDSVVGYLAARFGS.

The protein belongs to the MEMO1 family.

The sequence is that of MEMO1 family protein YN1551_0739 from Saccharolobus islandicus (strain Y.N.15.51 / Yellowstone #2) (Sulfolobus islandicus).